Here is a 260-residue protein sequence, read N- to C-terminus: Thrombin-like enzyme flavoxobin (260 aa).

Residues 1-18 (MVLIRVLANLLILQLSYA) form the signal peptide. The propeptide occupies 19 to 24 (QKSSEL). Positions 25 to 251 (VIGGDECNIN…YNAWIQSIIA (227 aa)) constitute a Peptidase S1 domain. 6 cysteine pairs are disulfide-bonded: Cys-31–Cys-165, Cys-52–Cys-68, Cys-100–Cys-258, Cys-144–Cys-212, Cys-176–Cys-191, and Cys-202–Cys-227. Catalysis depends on charge relay system residues His-67 and Asp-112. Ser-206 acts as the Charge relay system in catalysis.

It belongs to the peptidase S1 family. Snake venom subfamily. Monomer. As to expression, expressed by the venom gland.

It localises to the secreted. The enzyme catalyses Selective cleavage of Arg-|-Xaa bond in fibrinogen, to form fibrin, and release fibrinopeptide A. The specificity of further degradation of fibrinogen varies with species origin of the enzyme.. Inhibited by alpha(2)-macroglobulin, diisopropylfluorophosphate (DFP) and PMSF. Low inhibition by tosyl-L-lysine chloromethyl ketone. Its function is as follows. Thrombin-like snake venom serine protease that clots fibrinogen (FGA) by releasing fibrinopeptide A. According to PubMed:8585090, only cleaves rabbit fibrinogen, whereas no specificity is described in PubMed:3910643 (tests done on bovine fibrinogen). Also acts as a C3 convertase that independently cleaves human C3 and kick-starts the complement cascade. Also increases urokinase-type plasminogen activator (PLAU) and plasminogen activator inhibitor (SERPINE1) in cultured bovine pulmonary artery endothelial cells. Dose-dependently inhibits collagen-induced platelet aggregation. The polypeptide is Thrombin-like enzyme flavoxobin (TLF1) (Protobothrops flavoviridis (Habu)).